A 147-amino-acid chain; its full sequence is MIYWIFLGLAIIAEIIGTLSMKYASVSGEMTGHIVMYFMITGSYVMLSLAVKKVALGVAYALWEGIGILIITIFSVMWFGETLSPLKIAGLVTLIGGILLVKSGTRKPKQPNCHRGNRPPSVQELKTQTTGHHKGVAVESGEHHAAA.

4 helical membrane-spanning segments follow: residues 1 to 21 (MIYW…TLSM), 31 to 51 (TGHI…SLAV), 54 to 74 (VALG…ITIF), and 81 to 101 (ETLS…ILLV). Residues 105 to 147 (TRKPKQPNCHRGNRPPSVQELKTQTTGHHKGVAVESGEHHAAA) are disordered.

The protein belongs to the drug/metabolite transporter (DMT) superfamily. Small multidrug resistance (SMR) (TC 2.A.7.1) family. MdtJ subfamily. In terms of assembly, forms a complex with MdtI.

It is found in the cell inner membrane. Catalyzes the excretion of spermidine. This Yersinia pestis bv. Antiqua (strain Antiqua) protein is Spermidine export protein MdtJ.